We begin with the raw amino-acid sequence, 339 residues long: Phenylalanine--tRNA ligase alpha subunit (339 aa).

Residue glutamate 254 participates in Mg(2+) binding.

Belongs to the class-II aminoacyl-tRNA synthetase family. Phe-tRNA synthetase alpha subunit type 1 subfamily. Tetramer of two alpha and two beta subunits. Mg(2+) is required as a cofactor.

It is found in the cytoplasm. It catalyses the reaction tRNA(Phe) + L-phenylalanine + ATP = L-phenylalanyl-tRNA(Phe) + AMP + diphosphate + H(+). In Clostridium botulinum (strain 657 / Type Ba4), this protein is Phenylalanine--tRNA ligase alpha subunit.